We begin with the raw amino-acid sequence, 179 residues long: Sodium/potassium-transporting ATPase subunit beta-1-interacting protein 3 (179 aa).

4 consecutive transmembrane segments (helical) span residues 5-22 (TGRC…LVAL), 35-55 (APIL…FGTI), 62-82 (IVAY…IICF), and 151-171 (AVQI…ISVI).

It belongs to the NKAIN family. Interacts with atp1b1 C-terminus.

The protein resides in the cell membrane. The protein is Sodium/potassium-transporting ATPase subunit beta-1-interacting protein 3 (nkain3) of Xenopus laevis (African clawed frog).